Consider the following 60-residue polypeptide: Large ribosomal subunit protein uL30 (60 aa).

The protein belongs to the universal ribosomal protein uL30 family. Part of the 50S ribosomal subunit.

The chain is Large ribosomal subunit protein uL30 from Azoarcus sp. (strain BH72).